The chain runs to 268 residues: Tryptophan synthase alpha chain (268 aa).

Catalysis depends on proton acceptor residues Glu-49 and Asp-60.

It belongs to the TrpA family. Tetramer of two alpha and two beta chains.

The enzyme catalyses (1S,2R)-1-C-(indol-3-yl)glycerol 3-phosphate + L-serine = D-glyceraldehyde 3-phosphate + L-tryptophan + H2O. Its pathway is amino-acid biosynthesis; L-tryptophan biosynthesis; L-tryptophan from chorismate: step 5/5. Functionally, the alpha subunit is responsible for the aldol cleavage of indoleglycerol phosphate to indole and glyceraldehyde 3-phosphate. This chain is Tryptophan synthase alpha chain, found in Aeromonas hydrophila subsp. hydrophila (strain ATCC 7966 / DSM 30187 / BCRC 13018 / CCUG 14551 / JCM 1027 / KCTC 2358 / NCIMB 9240 / NCTC 8049).